Consider the following 308-residue polypeptide: Glutaminase 2 (308 aa).

Substrate-binding residues include serine 66, asparagine 117, glutamate 161, asparagine 168, tyrosine 192, tyrosine 244, and valine 262.

The protein belongs to the glutaminase family. As to quaternary structure, homotetramer.

The catalysed reaction is L-glutamine + H2O = L-glutamate + NH4(+). This is Glutaminase 2 from Shigella flexneri.